Here is a 142-residue protein sequence, read N- to C-terminus: Relaxin-3 (142 aa).

The N-terminal stretch at 1 to 25 is a signal peptide; that stretch reads MARYMLLLLLAVWVLTGELWPGAEA. Disulfide bonds link cysteine 35-cysteine 129, cysteine 47-cysteine 142, and cysteine 128-cysteine 133. A propeptide spans 55–118 (connecting peptide); that stretch reads SDILAHEAMG…GTPGVLRGSR (64 aa).

Belongs to the insulin family. In terms of assembly, heterodimer of a B chain and an A chain linked by two disulfide bonds.

The protein resides in the secreted. Functionally, may play a role in neuropeptide signaling processes. Ligand for LGR7, RXFP3 and RXFP4. The polypeptide is Relaxin-3 (RLN3) (Homo sapiens (Human)).